Reading from the N-terminus, the 1202-residue chain is Actin cytoskeleton-regulatory complex protein SLA1 (1202 aa).

SH3 domains lie at 3 to 70 (VFIG…VADV) and 71 to 132 (ISQV…PLNA). The tract at residues 133–278 (ETGSAVPPSQ…DDYNDSEPSG (146 aa)) is disordered. The span at 136–167 (SAVPPSQPAAAAALPPPIATSATSPPAPALTA) shows a compositional bias: low complexity. The segment covering 179–190 (HSSKTNAQASDS) has biased composition (polar residues). Basic and acidic residues-rich tracts occupy residues 191-201 (GNRDYADKDLP) and 253-269 (QHYEDDAEDYRSSQRDD). The 63-residue stretch at 380–442 (KSKKKGNVLY…PSHFIEPIQE (63 aa)) folds into the SH3 3 domain. Disordered stretches follow at residues 462–518 (GGKS…KSRI), 577–609 (KVRGSGTSSSRQDPRESERERRRRLRENDEKDR), 622–661 (QKARQLLDNERTKLQEQNEQPPSKPPRPSSGMGNRSRSQS), and 749–770 (GSLKNNNSENQSSVGQQLLPNN). Composition is skewed to basic and acidic residues over residues 506 to 518 (SKKELPNPKKSRI), 588 to 609 (QDPRESERERRRRLRENDEKDR), and 622 to 637 (QKARQLLDNERTKLQE). Composition is skewed to polar residues over residues 652–661 (GMGNRSRSQS) and 751–770 (LKNNNSENQSSVGQQLLPNN).

It belongs to the SLA1 family. In terms of assembly, component of the PAN1 actin cytoskeleton-regulatory complex.

It localises to the cell membrane. The protein resides in the endosome membrane. It is found in the cytoplasm. Its subcellular location is the cytoskeleton. The protein localises to the actin patch. In terms of biological role, component of the PAN1 actin cytoskeleton-regulatory complex required for the internalization of endosomes during actin-coupled endocytosis. The complex links the site of endocytosis to the cell membrane-associated actin cytoskeleton. Mediates uptake of external molecules and vacuolar degradation of plasma membrane proteins. Plays a role in the proper organization of the cell membrane-associated actin cytoskeleton and promotes its destabilization. The chain is Actin cytoskeleton-regulatory complex protein SLA1 (SLA1) from Vanderwaltozyma polyspora (strain ATCC 22028 / DSM 70294 / BCRC 21397 / CBS 2163 / NBRC 10782 / NRRL Y-8283 / UCD 57-17) (Kluyveromyces polysporus).